The primary structure comprises 403 residues: Tryptophan synthase beta chain (403 aa).

Lys90 bears the N6-(pyridoxal phosphate)lysine mark.

The protein belongs to the TrpB family. In terms of assembly, tetramer of two alpha and two beta chains. Pyridoxal 5'-phosphate is required as a cofactor.

It catalyses the reaction (1S,2R)-1-C-(indol-3-yl)glycerol 3-phosphate + L-serine = D-glyceraldehyde 3-phosphate + L-tryptophan + H2O. It functions in the pathway amino-acid biosynthesis; L-tryptophan biosynthesis; L-tryptophan from chorismate: step 5/5. In terms of biological role, the beta subunit is responsible for the synthesis of L-tryptophan from indole and L-serine. This is Tryptophan synthase beta chain from Leifsonia xyli subsp. xyli (strain CTCB07).